Here is a 216-residue protein sequence, read N- to C-terminus: UPF0502 protein PFL_4004 (216 aa).

This sequence belongs to the UPF0502 family.

In Pseudomonas fluorescens (strain ATCC BAA-477 / NRRL B-23932 / Pf-5), this protein is UPF0502 protein PFL_4004.